Consider the following 299-residue polypeptide: MNLTHLKTLEAESIHIFREVAAEFDNPVMLYSVGKDSAVLLHLARKAFAPGKIPFPLLHVDTNWKFKEMIAFRDQMAKDYDFELLVHKNPEGIEMGMGPFTHGSATHTDVMKTQGLKQALNKYGFDAAFGGARRDEEKSRAKERVYSFRDENHRWDPKSQRPELWNIYNGKVNKGESIRVFPLSNWTELDIWQYIYLESIPIVPLYLAEKRPVVERDGTLIMVDDDRMPIGEDEEVQMKSVRFRTLGCYPLTGAVESTANTLPEIIQEMLLTKTSERQGRVIDHDSAGSMEKKKMEGYF.

Belongs to the PAPS reductase family. CysD subfamily. In terms of assembly, heterodimer composed of CysD, the smaller subunit, and CysN.

It carries out the reaction sulfate + ATP + H(+) = adenosine 5'-phosphosulfate + diphosphate. Its pathway is sulfur metabolism; hydrogen sulfide biosynthesis; sulfite from sulfate: step 1/3. Its function is as follows. With CysN forms the ATP sulfurylase (ATPS) that catalyzes the adenylation of sulfate producing adenosine 5'-phosphosulfate (APS) and diphosphate, the first enzymatic step in sulfur assimilation pathway. APS synthesis involves the formation of a high-energy phosphoric-sulfuric acid anhydride bond driven by GTP hydrolysis by CysN coupled to ATP hydrolysis by CysD. In Colwellia psychrerythraea (strain 34H / ATCC BAA-681) (Vibrio psychroerythus), this protein is Sulfate adenylyltransferase subunit 2.